A 350-amino-acid chain; its full sequence is Protein YIPF3 (350 aa).

Low complexity predominate over residues 1-10 (MATTAAPAGG). Residues 1 to 51 (MATTAAPAGGARNGAGPEWGGFEENIQGGGSAVIDMENMDDTSGSSFEDMG) are disordered. A2 carries the post-translational modification N-acetylalanine. Over 2–148 (ATTAAPAGGA…PIKMVNFPQK (147 aa)) the chain is Cytoplasmic. The chain crosses the membrane as a helical span at residues 149-169 (IAGELYGPLMLVFTLVAILLH). At 170-187 (GMKTSDTIIREGTLMGTA) the chain is on the lumenal side. Residues 188–208 (IGTCFGYWLGVSSFIYFLAYL) traverse the membrane as a helical segment. The Cytoplasmic portion of the chain corresponds to 209–214 (CNAQIT). The chain crosses the membrane as a helical span at residues 215 to 237 (MLQMLALLGYGLFGHCIVLFITY). Topologically, residues 238–240 (NIH) are lumenal. The helical transmembrane segment at 241–263 (LHALFYLFWLLVGGLSTLRMVAV) threads the bilayer. Residues 264 to 274 (LVSRTVGPTQR) are Cytoplasmic-facing. The chain crosses the membrane as a helical span at residues 275 to 295 (LLLCGTLAALHMLFLLYLHFA). Topologically, residues 296–350 (YHKVVEGILDTLEGPNIPPIQRVPRDIPAMLPAARLPTTVLNATAKAVAVTLQSH) are lumenal. O-linked (GalNAc...) threonine glycans are attached at residues T333 and T334. N-linked (GlcNAc...) asparagine glycosylation occurs at N337. O-linked (GalNAc...) threonine glycosylation is found at T339 and T346.

Belongs to the YIP1 family. In terms of assembly, interacts with YIPF4 and YIPF5. N-glycosylated in the ER (40 kDa form I), then O-glycosylated in the Golgi apparatus (46 kDa form II), the C-terminal lumenal region is later removed in the Golgi apparatus to produce a 36 kDa form III. O-glycosylated with core 1-like and core 2-like glycans. O-glycan heterogeneity at Thr-346: HexNAc (minor), HexHexNAc (major), Hex1HexNAc2 (minor), Hex2HexNAc2 (minor) and dHex1Hex2HexNAc2 (minor). In terms of tissue distribution, expressed by nucleated hematopoietic cells (at protein level).

It localises to the cell membrane. The protein resides in the cytoplasm. The protein localises to the golgi apparatus. It is found in the cis-Golgi network membrane. Its function is as follows. Involved in the maintenance of the Golgi structure. May play a role in hematopoiesis. This is Protein YIPF3 (YIPF3) from Homo sapiens (Human).